Reading from the N-terminus, the 349-residue chain is Histidinol-phosphate aminotransferase 1 (349 aa).

Lysine 213 is subject to N6-(pyridoxal phosphate)lysine.

Belongs to the class-II pyridoxal-phosphate-dependent aminotransferase family. Histidinol-phosphate aminotransferase subfamily. In terms of assembly, homodimer. The cofactor is pyridoxal 5'-phosphate.

It catalyses the reaction L-histidinol phosphate + 2-oxoglutarate = 3-(imidazol-4-yl)-2-oxopropyl phosphate + L-glutamate. The protein operates within amino-acid biosynthesis; L-histidine biosynthesis; L-histidine from 5-phospho-alpha-D-ribose 1-diphosphate: step 7/9. The chain is Histidinol-phosphate aminotransferase 1 from Carboxydothermus hydrogenoformans (strain ATCC BAA-161 / DSM 6008 / Z-2901).